The following is a 370-amino-acid chain: uncharacterized protein (370 aa).

Residues aspartate 152, histidine 154, aspartate 184, asparagine 215, histidine 306, and histidine 308 each contribute to the a divalent metal cation site.

This sequence belongs to the metallophosphoesterase superfamily. Requires a divalent metal cation as cofactor.

This is an uncharacterized protein from Helicobacter pylori (strain J99 / ATCC 700824) (Campylobacter pylori J99).